We begin with the raw amino-acid sequence, 163 residues long: Endoribonuclease YbeY (163 aa).

Zn(2+) is bound by residues histidine 116, histidine 120, and histidine 126.

This sequence belongs to the endoribonuclease YbeY family. Requires Zn(2+) as cofactor.

It localises to the cytoplasm. Its function is as follows. Single strand-specific metallo-endoribonuclease involved in late-stage 70S ribosome quality control and in maturation of the 3' terminus of the 16S rRNA. The chain is Endoribonuclease YbeY from Idiomarina loihiensis (strain ATCC BAA-735 / DSM 15497 / L2-TR).